Consider the following 211-residue polypeptide: Protein-L-isoaspartate O-methyltransferase (211 aa).

Serine 59 is an active-site residue.

It belongs to the methyltransferase superfamily. L-isoaspartyl/D-aspartyl protein methyltransferase family.

The protein localises to the cytoplasm. It carries out the reaction [protein]-L-isoaspartate + S-adenosyl-L-methionine = [protein]-L-isoaspartate alpha-methyl ester + S-adenosyl-L-homocysteine. In terms of biological role, catalyzes the methyl esterification of L-isoaspartyl residues in peptides and proteins that result from spontaneous decomposition of normal L-aspartyl and L-asparaginyl residues. It plays a role in the repair and/or degradation of damaged proteins. In Ignicoccus hospitalis (strain KIN4/I / DSM 18386 / JCM 14125), this protein is Protein-L-isoaspartate O-methyltransferase.